Consider the following 490-residue polypeptide: Auxin transporter-like protein 5 (490 aa).

At 1–55 (MEMANDKVAETVIVGNYVEMESEGKPPQDIKSKLSNFLWHGGSAYDAWFSCASNQ) the chain is on the cytoplasmic side. Residues 56–73 (VAQVLLTLPYSFSQLGML) traverse the membrane as a helical segment. The Extracellular segment spans residues 74–75 (SG). The helical transmembrane segment at 76–96 (ILFQLFYGILGSWTAYLISIL) threads the bilayer. Residues 97-132 (YVEYRTRKEREKVNFRSHVIQWFEVLDGLLGKHWRN) are Cytoplasmic-facing. Residues 133 to 153 (VGLGFNCTFLLFGSVIQLIAC) form a helical membrane-spanning segment. The Extracellular portion of the chain corresponds to 154-168 (ASNIYYINDNLDKRT). A helical transmembrane segment spans residues 169–189 (WTYIFGACCATTVFIPSFHNY). Residue Arg190 is a topological domain, cytoplasmic. The chain crosses the membrane as a helical span at residues 191–211 (IWSFLGLVMTTYTAWYLTIAA). The Extracellular portion of the chain corresponds to 212–227 (VLHGQVEGVKHSGPNK). Residues 228–248 (IILYFTGATNILYTFGGHAVT) traverse the membrane as a helical segment. Topologically, residues 249-262 (VEIMHAMWKPQKFK) are cytoplasmic. The chain crosses the membrane as a helical span at residues 263–283 (AIYLLATLYVLTLTIPSATAV). Topologically, residues 284 to 310 (YWAFGDMLLNHSNAFALLPKSPFRDMA) are extracellular. N-linked (GlcNAc...) asparagine glycosylation is present at Asn293. Residues 311-331 (VILMLIHQFITFGFACTPLYF) form a helical membrane-spanning segment. Residues 332-352 (VWEKTVGMHECKSLCKRALVR) are Cytoplasmic-facing. The helical transmembrane segment at 353–373 (LPVVIPIWFLAIIFPFFGPIN) threads the bilayer. Over 374–376 (STV) the chain is Extracellular. The helical transmembrane segment at 377–397 (GSLLVSFTVYIIPALAHIFTF) threads the bilayer. Over 398–420 (KSSSARQNAVEQPPKFVGRWVGT) the chain is Cytoplasmic. Residues 421 to 441 (FVINVFIVVWVLIVGFGFGGW) traverse the membrane as a helical segment. The Extracellular portion of the chain corresponds to 442–490 (ASMVNFVHQIDTFGLFTKCYQCPPPTPSVPTMPPHQMNATAPSPHHHHH). Asn479 carries N-linked (GlcNAc...) asparagine glycosylation.

It belongs to the amino acid/polyamine transporter 2 family. Amino acid/auxin permease (AAAP) (TC 2.A.18.1) subfamily. As to expression, shoots and roots of nodulating plants, at low levels.

Its subcellular location is the cell membrane. In terms of biological role, carrier protein involved in proton-driven auxin influx. Mediates the formation of auxin gradient from developing leaves (site of auxin biosynthesis) to tips by contributing to the loading of auxin in vascular tissues and facilitating acropetal (base to tip) auxin transport within inner tissues of the root apex, and basipetal (tip to base) auxin transport within outer tissues of the root apex. May be involved in lateral roots and nodules formation. The chain is Auxin transporter-like protein 5 (LAX5) from Medicago truncatula (Barrel medic).